The primary structure comprises 382 residues: 1-deoxy-D-xylulose 5-phosphate reductoisomerase (382 aa).

6 residues coordinate NADPH: Thr10, Gly11, Ser12, Ile13, Asn38, and Asn120. A 1-deoxy-D-xylulose 5-phosphate-binding site is contributed by Lys121. NADPH is bound at residue Glu122. Asp146 lines the Mn(2+) pocket. Ser147, Glu148, Ser172, and His195 together coordinate 1-deoxy-D-xylulose 5-phosphate. Mn(2+) is bound at residue Glu148. Gly201 is an NADPH binding site. The 1-deoxy-D-xylulose 5-phosphate site is built by Ser208, Asn213, Lys214, and Glu217. Residue Glu217 coordinates Mn(2+).

The protein belongs to the DXR family. Mg(2+) serves as cofactor. It depends on Mn(2+) as a cofactor.

The enzyme catalyses 2-C-methyl-D-erythritol 4-phosphate + NADP(+) = 1-deoxy-D-xylulose 5-phosphate + NADPH + H(+). Its pathway is isoprenoid biosynthesis; isopentenyl diphosphate biosynthesis via DXP pathway; isopentenyl diphosphate from 1-deoxy-D-xylulose 5-phosphate: step 1/6. In terms of biological role, catalyzes the NADPH-dependent rearrangement and reduction of 1-deoxy-D-xylulose-5-phosphate (DXP) to 2-C-methyl-D-erythritol 4-phosphate (MEP). The polypeptide is 1-deoxy-D-xylulose 5-phosphate reductoisomerase (Thermoanaerobacter sp. (strain X514)).